The primary structure comprises 349 residues: ATP phosphoribosyltransferase regulatory subunit (349 aa).

Positions 327–349 (GRGRGVRPRRASARGGRARARPR) are disordered. The segment covering 330–349 (RGVRPRRASARGGRARARPR) has biased composition (basic residues).

Belongs to the class-II aminoacyl-tRNA synthetase family. HisZ subfamily. As to quaternary structure, heteromultimer composed of HisG and HisZ subunits.

It localises to the cytoplasm. Its pathway is amino-acid biosynthesis; L-histidine biosynthesis; L-histidine from 5-phospho-alpha-D-ribose 1-diphosphate: step 1/9. Required for the first step of histidine biosynthesis. May allow the feedback regulation of ATP phosphoribosyltransferase activity by histidine. The sequence is that of ATP phosphoribosyltransferase regulatory subunit from Anaeromyxobacter sp. (strain K).